The primary structure comprises 514 residues: Serine/threonine-protein kinase 33 (514 aa).

Over residues 65 to 86 the composition is skewed to basic and acidic residues; sequence INRDITSRKDLPSRTSNVERKA. Residues 65–91 form a disordered region; the sequence is INRDITSRKDLPSRTSNVERKASQQQW. Residues 116–381 enclose the Protein kinase domain; it reads YTFGRILGKG…AKELLDNQWL (266 aa). ATP-binding positions include 122–130 and K145; that span reads LGKGSFGIV. Residue D238 is the Proton acceptor of the active site. Disordered regions lie at residues 402-468 and 485-514; these read KNNP…DMCS and MEKT…KKKL. At S407 the chain carries Phosphoserine. Residues 413–426 are compositionally biased toward basic and acidic residues; that stretch reads TEEKNKPSTEEKLK. Residues 449–468 are compositionally biased toward polar residues; sequence STAYEKQFPATSKDNFDMCS.

The protein belongs to the protein kinase superfamily. CAMK Ser/Thr protein kinase family. CaMK subfamily. Homodimer. Post-translationally, autophosphorylated. As to expression, highly expressed in testis, fetal lung and heart, followed by pituitary gland, kidney, interventricular septum, pancreas, heart, trachea, thyroid gland and uterus. Weak hybridization signals were observed in the following tissues: amygdala, aorta, esophagus, colon ascending, colon transverse, skeletal muscle, spleen, peripheral blood leukocyte, lymph node, bone marrow, placenta, prostate, liver, salivary gland, mammary gland, some tumor cell lines, fetal brain, fetal liver, fetal spleen and fetal thymus. No signal at all was detectable in RNA from tissues of the nervous system.

It is found in the cytoplasm. The protein resides in the cytoskeleton. It localises to the perinuclear region. It carries out the reaction L-seryl-[protein] + ATP = O-phospho-L-seryl-[protein] + ADP + H(+). The catalysed reaction is L-threonyl-[protein] + ATP = O-phospho-L-threonyl-[protein] + ADP + H(+). Its activity is regulated as follows. Specifically inhibited by CDD-2807 ((3-([1,1'-Biphenyl]-2-ylethynyl)-1H-indazol-5-yl)(2,6-diazaspiro[3.5]nonan-2-yl)methanone). Serine/threonine protein kinase required for spermatid differentiation and male fertility. Promotes sperm flagella assembly during spermatogenesis by mediating phosphorylation of fibrous sheath proteins AKAP3 and AKAP4. Also phosphorylates vimentin/VIM, thereby regulating the dynamic behavior of the intermediate filament cytoskeleton. The chain is Serine/threonine-protein kinase 33 from Homo sapiens (Human).